Reading from the N-terminus, the 244-residue chain is Capsid protein (244 aa).

Residues 1-24 (MSTSKRKRGDDANWSKRVPKKKPS) carry the Bipartite nuclear localization signal motif. Residues 1-39 (MSTSKRKRGDDANWSKRVPKKKPSSAGLKRAGSKADRPS) are disordered.

This sequence belongs to the geminiviridae capsid protein family. Homomultimer. Interacts with the movement protein. Binds to single-stranded and double-stranded viral DNA.

Its subcellular location is the virion. It localises to the host nucleus. In terms of biological role, encapsidates the viral genome into characteristic twinned ('geminate') particles. Binds the genomic viral ssDNA and shuttles it into and out of the cell nucleus. Plays a role in protection of the genome from degradation, virus acquisition and transmission by insect vectors, infectivity, and systemic movement. The CP of monopartite geminiviruses is absolutely essential for virus movement. This Avena sativa (Oat) protein is Capsid protein.